We begin with the raw amino-acid sequence, 308 residues long: Palmitoyltransferase ZDHHC7 (308 aa).

At 1-50 the chain is on the cytoplasmic side; the sequence is MQPSGHRLRDIEHHPLLTDNDNYDSASSSSSEADMADRVWFIRDGCGMVC. The helical transmembrane segment at 51–71 threads the bilayer; that stretch reads AVMTWLLVVYADFVVTFVMLL. Topologically, residues 72 to 75 are lumenal; sequence PSKD. Residues 76 to 96 form a helical membrane-spanning segment; it reads FWYSVVNGVLFNCLAVLALSS. Topologically, residues 97-173 are cytoplasmic; that stretch reads HLRTMLTDPG…NNCVGEKNQR (77 aa). The DHHC domain maps to 130–180; the sequence is YKCPKCCCIKPERAHHCSICKRCIRKMDHHCPWVNNCVGEKNQRFFVLFTM. Cys-160 acts as the S-palmitoyl cysteine intermediate in catalysis. Residues 174 to 194 traverse the membrane as a helical segment; it reads FFVLFTMYIALSSIHALILCG. Residues 195–217 lie on the Lumenal side of the membrane; it reads LQFISCVRGQWTECSDFSPPITV. A helical membrane pass occupies residues 218-238; that stretch reads ILLVFLCLEGLLFFTFTAVMF. Over 239–308 the chain is Cytoplasmic; the sequence is GTQIHSICND…TRKGGPEFSV (70 aa).

The protein belongs to the DHHC palmitoyltransferase family. As to quaternary structure, homooligomers. Heterooligomers with ZDHHC3. Post-translationally, autopalmitoylated. As to expression, widely expressed. Present in Sertoli cells (at protein level).

It is found in the golgi apparatus membrane. It carries out the reaction L-cysteinyl-[protein] + hexadecanoyl-CoA = S-hexadecanoyl-L-cysteinyl-[protein] + CoA. The catalysed reaction is L-cysteinyl-[protein] + tetradecanoyl-CoA = S-tetradecanoyl-L-cysteinyl-[protein] + CoA. It catalyses the reaction L-cysteinyl-[protein] + octadecanoyl-CoA = S-octadecanoyl-L-cysteinyl-[protein] + CoA. Golgi-localized palmitoyltransferase that catalyzes the addition of palmitate onto various protein substrates and therefore functions in several unrelated biological processes. Has no stringent fatty acid selectivity and in addition to palmitate can also transfer onto target proteins myristate from tetradecanoyl-CoA and stearate from octadecanoyl-CoA. Palmitoylates sex steroid hormone receptors, including ESR1, PGR and AR, thereby regulating their targeting to the plasma membrane and their function in rapid intracellular signaling upon binding of sex hormones. Palmitoylates GNAQ, a heterotrimeric G protein, regulating its dynamic localization at the plasma membrane and is thereby involved in GNAQ-dependent G protein-coupled receptor signaling pathways. Also functions in ligand-induced cell death by regulating the FAS signaling pathway through the palmitoylation and stabilization of the receptor at the plasma membrane. In epithelial cells, palmitoylates SCRIB and regulates its localization to the plasma membrane, regulating indirectly cell polarity and differentiation. Also palmitoylates JAM3 and promotes its expression at tight junctions and regulates its function in cell migration. Palmitoylates the glucose transporter GLUT4/SLC2A4 and controls the insulin-dependent translocation of GLUT4 to the plasma membrane. In brain, could also palmitoylate SNAP25 and DLG4/PSD95. Could also palmitoylate DNAJC5 and regulate its localization to the Golgi membrane. Could also palmitoylate NCDN. May play a role in follicle stimulation hormone (FSH) activation of testicular Sertoli cells. Activates pyroptosis by catalyzing palmitoylation of gasdermin-D (GSDMD). This Rattus norvegicus (Rat) protein is Palmitoyltransferase ZDHHC7.